Reading from the N-terminus, the 533-residue chain is Laccase-2 (533 aa).

An N-terminal signal peptide occupies residues methionine 1–alanine 23. Plastocyanin-like domains follow at residues isoleucine 25–tyrosine 171, isoleucine 173–asparagine 336, and threonine 382–aspartate 501. Positions 98, 100, 143, and 145 each coordinate Cu cation. Disulfide bonds link cysteine 119-cysteine 516 and cysteine 151-cysteine 238. The Cu cation site is built by histidine 427, histidine 430, and histidine 432. Asparagine 467 is a glycosylation site (N-linked (GlcNAc...) (high mannose) asparagine). Histidine 483, cysteine 484, histidine 485, and histidine 489 together coordinate Cu cation.

The protein belongs to the multicopper oxidase family. The cofactor is Cu cation. Post-translationally, N-glycosylated at Asn-467; contains a high-mannose glycan with a varying number of mannose residues.

Its subcellular location is the secreted. It carries out the reaction 4 hydroquinone + O2 = 4 benzosemiquinone + 2 H2O. Lignin degradation and detoxification of lignin-derived products. In Pleurotus ostreatus (Oyster mushroom), this protein is Laccase-2 (POX2).